Reading from the N-terminus, the 105-residue chain is Nucleoid-associated protein RPE_4812 (105 aa).

The protein belongs to the YbaB/EbfC family. In terms of assembly, homodimer.

Its subcellular location is the cytoplasm. It localises to the nucleoid. In terms of biological role, binds to DNA and alters its conformation. May be involved in regulation of gene expression, nucleoid organization and DNA protection. In Rhodopseudomonas palustris (strain BisA53), this protein is Nucleoid-associated protein RPE_4812.